The chain runs to 346 residues: MDLQKQLEELKISTQEKLKEMTGNHTKELQDLRVQVLGKKGSLTELLKGLKDLSNDLRPVVGKQVNEVRDILTKAFEEQAKVVEAAKIQAQLESESVDVTLPGRQMTLGHRHVLTQTSEEIEDIFLGMGFQVVGGFEVEKDYYNFERMNLPKDHPARDMQDTFYITEEILLRTHTSPVQARTMDQHDFSKGPLKMISPGRVFRRDTDDATHSHQFHQIEGLVVGENISMGDLKGTLQLISQKMFGAERKIRLRPSYFPFTEPSVEVDVSCFKCGGKGCNVCKQTGWIEILGAGMVHPSVLEMSGIDSEKYSGFAFGLGQERIAMLRYGINDIRGFYQGDVRFTDQF.

Residue glutamate 261 participates in Mg(2+) binding.

The protein belongs to the class-II aminoacyl-tRNA synthetase family. Phe-tRNA synthetase alpha subunit type 1 subfamily. In terms of assembly, tetramer of two alpha and two beta subunits. Requires Mg(2+) as cofactor.

The protein localises to the cytoplasm. It carries out the reaction tRNA(Phe) + L-phenylalanine + ATP = L-phenylalanyl-tRNA(Phe) + AMP + diphosphate + H(+). This chain is Phenylalanine--tRNA ligase alpha subunit, found in Streptococcus agalactiae serotype III (strain NEM316).